The primary structure comprises 227 residues: Lipoprotein-releasing system ATP-binding protein LolD (227 aa).

An ABC transporter domain is found at leucine 7–alanine 227. Position 43-50 (glycine 43–serine 50) interacts with ATP.

It belongs to the ABC transporter superfamily. Lipoprotein translocase (TC 3.A.1.125) family. In terms of assembly, the complex is composed of two ATP-binding proteins (LolD) and two transmembrane proteins (LolC and LolE).

The protein resides in the cell inner membrane. Functionally, part of the ABC transporter complex LolCDE involved in the translocation of mature outer membrane-directed lipoproteins, from the inner membrane to the periplasmic chaperone, LolA. Responsible for the formation of the LolA-lipoprotein complex in an ATP-dependent manner. This chain is Lipoprotein-releasing system ATP-binding protein LolD, found in Pseudomonas syringae pv. tomato (strain ATCC BAA-871 / DC3000).